The chain runs to 298 residues: Small ribosomal subunit protein uS2 (298 aa).

Residues 240–298 (AGENWDTQAPGAGVPGSAFAAASAAAATSWEADGGDWAASSAPPAGESWAETQPTEAKW) form a disordered region. Low complexity predominate over residues 248 to 271 (APGAGVPGSAFAAASAAAATSWEA). Positions 289–298 (AETQPTEAKW) are enriched in polar residues.

This sequence belongs to the universal ribosomal protein uS2 family. Component of the small ribosomal subunit. Mature ribosomes consist of a small (40S) and a large (60S) subunit. The 40S subunit contains about 33 different proteins and 1 molecule of RNA (18S). The 60S subunit contains about 49 different proteins and 3 molecules of RNA (25S, 5.8S and 5S). Interacts with rps21.

The protein localises to the cytoplasm. In terms of biological role, required for the assembly and/or stability of the 40S ribosomal subunit. Required for the processing of the 20S rRNA-precursor to mature 18S rRNA in a late step of the maturation of 40S ribosomal subunits. The protein is Small ribosomal subunit protein uS2 (rps0) of Aspergillus clavatus (strain ATCC 1007 / CBS 513.65 / DSM 816 / NCTC 3887 / NRRL 1 / QM 1276 / 107).